A 104-amino-acid polypeptide reads, in one-letter code: L-rhamnose mutarotase (104 aa).

Tyr-18 is a substrate binding site. His-22 (proton donor) is an active-site residue. Substrate-binding positions include Tyr-41 and 76 to 77; that span reads WW.

This sequence belongs to the rhamnose mutarotase family. Homodimer.

Its subcellular location is the cytoplasm. It catalyses the reaction alpha-L-rhamnose = beta-L-rhamnose. It participates in carbohydrate metabolism; L-rhamnose metabolism. In terms of biological role, involved in the anomeric conversion of L-rhamnose. The polypeptide is L-rhamnose mutarotase (Jannaschia sp. (strain CCS1)).